Consider the following 338-residue polypeptide: Nicotinate-nucleotide--dimethylbenzimidazole phosphoribosyltransferase (338 aa).

E306 functions as the Proton acceptor in the catalytic mechanism.

It belongs to the CobT family.

It catalyses the reaction 5,6-dimethylbenzimidazole + nicotinate beta-D-ribonucleotide = alpha-ribazole 5'-phosphate + nicotinate + H(+). The protein operates within nucleoside biosynthesis; alpha-ribazole biosynthesis; alpha-ribazole from 5,6-dimethylbenzimidazole: step 1/2. In terms of biological role, catalyzes the synthesis of alpha-ribazole-5'-phosphate from nicotinate mononucleotide (NAMN) and 5,6-dimethylbenzimidazole (DMB). In Cereibacter sphaeroides (strain ATCC 17023 / DSM 158 / JCM 6121 / CCUG 31486 / LMG 2827 / NBRC 12203 / NCIMB 8253 / ATH 2.4.1.) (Rhodobacter sphaeroides), this protein is Nicotinate-nucleotide--dimethylbenzimidazole phosphoribosyltransferase.